The sequence spans 277 residues: WRKY transcription factor 68 (277 aa).

Residues 51–96 (TPLMHFPTTPNSSSSEAVNGDDEEEEDGEEQQHKTKKRFKFTKMSR) are disordered. Residues 58 to 67 (TTPNSSSSEA) show a composition bias toward polar residues. Residues 69–79 (NGDDEEEEDGE) show a composition bias toward acidic residues. Over residues 84–96 (KTKKRFKFTKMSR) the composition is skewed to basic residues. Positions 112–177 (SEVLHLDDGY…YEGQHTHPRP (66 aa)) form a DNA-binding region, WRKY. Positions 183–206 (KEGSSPSNGSASRAHIGLPTLPPQ) are disordered.

The protein belongs to the WRKY group II-c family.

Its subcellular location is the nucleus. Transcription factor. Interacts specifically with the W box (5'-(T)TGAC[CT]-3'), a frequently occurring elicitor-responsive cis-acting element. This Arabidopsis thaliana (Mouse-ear cress) protein is WRKY transcription factor 68 (WRKY68).